We begin with the raw amino-acid sequence, 208 residues long: Small ribosomal subunit protein uS4 (208 aa).

The S4 RNA-binding domain occupies 98–161 (RRLDNVIYRM…KELEIIKESL (64 aa)).

It belongs to the universal ribosomal protein uS4 family. Part of the 30S ribosomal subunit. Contacts protein S5. The interaction surface between S4 and S5 is involved in control of translational fidelity.

One of the primary rRNA binding proteins, it binds directly to 16S rRNA where it nucleates assembly of the body of the 30S subunit. In terms of biological role, with S5 and S12 plays an important role in translational accuracy. The chain is Small ribosomal subunit protein uS4 from Thermodesulfovibrio yellowstonii (strain ATCC 51303 / DSM 11347 / YP87).